Reading from the N-terminus, the 253-residue chain is 3-deoxy-manno-octulosonate cytidylyltransferase (253 aa).

The protein belongs to the KdsB family.

It is found in the cytoplasm. The enzyme catalyses 3-deoxy-alpha-D-manno-oct-2-ulosonate + CTP = CMP-3-deoxy-beta-D-manno-octulosonate + diphosphate. It functions in the pathway nucleotide-sugar biosynthesis; CMP-3-deoxy-D-manno-octulosonate biosynthesis; CMP-3-deoxy-D-manno-octulosonate from 3-deoxy-D-manno-octulosonate and CTP: step 1/1. Its pathway is bacterial outer membrane biogenesis; lipopolysaccharide biosynthesis. In terms of biological role, activates KDO (a required 8-carbon sugar) for incorporation into bacterial lipopolysaccharide in Gram-negative bacteria. The sequence is that of 3-deoxy-manno-octulosonate cytidylyltransferase from Proteus mirabilis (strain HI4320).